We begin with the raw amino-acid sequence, 205 residues long: RNA pyrophosphohydrolase (205 aa).

The Nudix hydrolase domain maps to 6–149; the sequence is GFRPNVGIVL…KRGVYARALR (144 aa). The Nudix box motif lies at 38–59; the sequence is GGMNTDETPVEAMYRELREETG. The disordered stretch occupies residues 177–205; the sequence is PGSSAAGHDSPRKRPRKRSGARPMRINND. Residues 187–196 show a composition bias toward basic residues; it reads PRKRPRKRSG.

The protein belongs to the Nudix hydrolase family. RppH subfamily. A divalent metal cation serves as cofactor.

In terms of biological role, accelerates the degradation of transcripts by removing pyrophosphate from the 5'-end of triphosphorylated RNA, leading to a more labile monophosphorylated state that can stimulate subsequent ribonuclease cleavage. The sequence is that of RNA pyrophosphohydrolase from Xanthomonas oryzae pv. oryzae (strain MAFF 311018).